The chain runs to 375 residues: Growth/differentiation factor 8 (375 aa).

Residues 1–23 (MQKLQIYVYIYLFMLIVAGPVDL) form the signal peptide. The propeptide occupies 24–266 (NENSEQKENV…VTDTPKRSRR (243 aa)). Asparagine 71 carries N-linked (GlcNAc...) asparagine glycosylation. 4 disulfide bridges follow: cysteine 272-cysteine 282, cysteine 281-cysteine 340, cysteine 309-cysteine 372, and cysteine 313-cysteine 374.

This sequence belongs to the TGF-beta family. As to quaternary structure, homodimer; disulfide-linked. Interacts with WFIKKN2, leading to inhibit its activity. Interacts with FSTL3. Post-translationally, synthesized as large precursor molecule that undergoes proteolytic cleavage to generate an N-terminal propeptide and a disulfide linked C-terminal dimer, which is the biologically active molecule. The circulating form consists of a latent complex of the C-terminal dimer and other proteins, including its propeptide, which maintain the C-terminal dimer in a latent, inactive state. Ligand activation requires additional cleavage of the prodomain by a tolloid-like metalloproteinase.

The protein localises to the secreted. Its function is as follows. Acts specifically as a negative regulator of skeletal muscle growth. This chain is Growth/differentiation factor 8 (MSTN), found in Sus scrofa (Pig).